The sequence spans 648 residues: MAQISLTFPDGSTREFDAGVTAGDVAASISTSLRKKAISATVGGAHYDLAWPIHADATIAIHTMQDEEQANELVRHDLAHIMARAVQEIWPETKVTIGPVIKDGWYYDFDRAEAFSPEDLGLIEKKMKEIINKRDPVRTEVWDRARAIAHYEANDEPYKVELINAIPGDEPLRMYWHGDWQDLCRGPHLQHTGQVPGDAFKLMSIAGAYWRGDSDRAMLQRIYGVAFTGKEKLKAHLTMLEEAAKRDHRKLGREMDLFHMQEEAPGQVFWHPNGWSIYTTLQDYMRRKQRAAGYQEVNTPQVVDRKLWEASGHWDKYQEHMFIVEVDEDHAREKAVNALKPMNCPCHVQIFNQGLKSYRDLPLRMAEFGSCNRYEPSGALHGIMRVRGFTQDDGHTFCREDQIEAECAAFITYLSSVYQDLGFEKFEIMFATRPEKRVGSEESWDHVEAALENAIKATGHPYTLDEGEGAFYGPKLDFKLTDAIGREWQCGTFQVDPNLPERLDATYIGQDGAKHRPYMLHRACLGSFERFIGILIENSAGKLPFWLAPRQVVVASIISDADDYVLEVVEKLQAAGVRAEADVRNEKINYKVREHSVGKVPVILAVGAREVEEKTVTLRRLGEKKTSVETLDAVTQALGREATPPDLL.

The TGS domain maps to 1–63 (MAQISLTFPD…HADATIAIHT (63 aa)). Residues 247–544 (DHRKLGREMD…LIENSAGKLP (298 aa)) form a catalytic region. Zn(2+) is bound by residues Cys344, His395, and His521.

It belongs to the class-II aminoacyl-tRNA synthetase family. Homodimer. Requires Zn(2+) as cofactor.

The protein localises to the cytoplasm. It carries out the reaction tRNA(Thr) + L-threonine + ATP = L-threonyl-tRNA(Thr) + AMP + diphosphate + H(+). In terms of biological role, catalyzes the attachment of threonine to tRNA(Thr) in a two-step reaction: L-threonine is first activated by ATP to form Thr-AMP and then transferred to the acceptor end of tRNA(Thr). Also edits incorrectly charged L-seryl-tRNA(Thr). This chain is Threonine--tRNA ligase, found in Roseobacter denitrificans (strain ATCC 33942 / OCh 114) (Erythrobacter sp. (strain OCh 114)).